We begin with the raw amino-acid sequence, 359 residues long: 3-dehydroquinate synthase (359 aa).

NAD(+) contacts are provided by residues 71–76 (DGEAYK), 105–109 (GVIGD), 129–130 (TT), K142, and K151. Positions 184, 247, and 264 each coordinate Zn(2+).

This sequence belongs to the sugar phosphate cyclases superfamily. Dehydroquinate synthase family. It depends on Co(2+) as a cofactor. Zn(2+) is required as a cofactor. Requires NAD(+) as cofactor.

Its subcellular location is the cytoplasm. The enzyme catalyses 7-phospho-2-dehydro-3-deoxy-D-arabino-heptonate = 3-dehydroquinate + phosphate. The protein operates within metabolic intermediate biosynthesis; chorismate biosynthesis; chorismate from D-erythrose 4-phosphate and phosphoenolpyruvate: step 2/7. Functionally, catalyzes the conversion of 3-deoxy-D-arabino-heptulosonate 7-phosphate (DAHP) to dehydroquinate (DHQ). The chain is 3-dehydroquinate synthase from Burkholderia mallei (strain NCTC 10247).